The chain runs to 413 residues: Peptidase T (413 aa).

Residue His-82 coordinates Zn(2+). Asp-84 is a catalytic residue. Asp-144 contributes to the Zn(2+) binding site. The Proton acceptor role is filled by Glu-178. Positions 179, 201, and 383 each coordinate Zn(2+).

The protein belongs to the peptidase M20B family. Homotrimer. Requires Zn(2+) as cofactor.

It localises to the cytoplasm. It catalyses the reaction Release of the N-terminal residue from a tripeptide.. Its activity is regulated as follows. Totally inhibited by EDTA, EGTA, and 1,10-phenanthroline. Strongly inhibited by divalent cations such as Cu(2+), Cd(2+), Co(2+) and Mn(2+). Partially inhibited by the reducing agents 2-mercaptoethanol and dithiothreitol. Its function is as follows. Cleaves the N-terminal amino acid of tripeptides. Shows broad substrate specificity, exhibiting maximum activity against hydrophobic tripeptides, with the highest activity for Met-Gly-Gly. Therefore this enzyme may play an important role in flavor formation during cheese ripening. Is also able to slowly hydrolyze some hydrophobic dipeptides, but displays no activity against tetrapeptides and the tripeptide Phe-Gly-Gly. The polypeptide is Peptidase T (pepT) (Lactobacillus helveticus (Lactobacillus suntoryeus)).